We begin with the raw amino-acid sequence, 234 residues long: Leucyl/phenylalanyl-tRNA--protein transferase (234 aa).

Belongs to the L/F-transferase family.

The protein resides in the cytoplasm. It carries out the reaction N-terminal L-lysyl-[protein] + L-leucyl-tRNA(Leu) = N-terminal L-leucyl-L-lysyl-[protein] + tRNA(Leu) + H(+). It catalyses the reaction N-terminal L-arginyl-[protein] + L-leucyl-tRNA(Leu) = N-terminal L-leucyl-L-arginyl-[protein] + tRNA(Leu) + H(+). The catalysed reaction is L-phenylalanyl-tRNA(Phe) + an N-terminal L-alpha-aminoacyl-[protein] = an N-terminal L-phenylalanyl-L-alpha-aminoacyl-[protein] + tRNA(Phe). Its function is as follows. Functions in the N-end rule pathway of protein degradation where it conjugates Leu, Phe and, less efficiently, Met from aminoacyl-tRNAs to the N-termini of proteins containing an N-terminal arginine or lysine. In Hahella chejuensis (strain KCTC 2396), this protein is Leucyl/phenylalanyl-tRNA--protein transferase.